A 443-amino-acid polypeptide reads, in one-letter code: Phosphatidate cytidylyltransferase 2 (443 aa).

Residues 1–38 (MTELRQRAVREDAPPEDKESESEAKLDGETASDSESRA) are compositionally biased toward basic and acidic residues. Residues 1 to 51 (MTELRQRAVREDAPPEDKESESEAKLDGETASDSESRAETAPPPTSIDDTP) form a disordered region. Ser20 is modified (phosphoserine). At Thr30 the chain carries Phosphothreonine. Phosphoserine occurs at positions 32, 34, and 36. Thr50 carries the post-translational modification Phosphothreonine. Transmembrane regions (helical) follow at residues 78 to 98 (MIAF…MIVM), 129 to 149 (WYFL…DYFF), 165 to 185 (HRFI…LSLV), 212 to 232 (LVIH…SCVI), 261 to 281 (GFIG…YVMS), and 338 to 358 (SALS…ASGF).

The protein belongs to the CDS family. As to quaternary structure, homodimer.

It is found in the endoplasmic reticulum membrane. It carries out the reaction a 1,2-diacyl-sn-glycero-3-phosphate + CTP + H(+) = a CDP-1,2-diacyl-sn-glycerol + diphosphate. It catalyses the reaction 1-octadecanoyl-2-(5Z,8Z,11Z,14Z-eicosatetraenoyl)-sn-glycero-3-phosphate + CTP + H(+) = 1-octadecanoyl-2-(5Z,8Z,11Z,14Z-eicosatetraenoyl)-sn-glycero-3-cytidine-5'-diphosphate + diphosphate. The enzyme catalyses 1-octadecanoyl-2-(9Z,12Z-octadecadienoyl)-sn-glycero-3-phosphate + CTP + H(+) = 1-octadecanoyl-2-(9Z,12Z-octadecadienoyl)-sn-glycero-3-cytidine-5'-diphosphate + diphosphate. The catalysed reaction is 1-hexadecanoyl-2-(5Z,8Z,11Z,14Z-eicosatetraenoyl)-sn-glycero-3-phosphate + CTP + H(+) = 1-hexadecanoyl-2-(5Z,8Z,11Z,14Z-eicosatetraenoyl)-sn-glycero-3-cytidine-5'-diphosphate + diphosphate. It carries out the reaction 1,2-di-(5Z,8Z,11Z,14Z)-eicosatetraenoyl-sn-glycero-3-phosphate + CTP + H(+) = 1,2-di-(5Z,8Z,11Z,14Z-eicosatetraenoyl)-sn-glycero-3-cytidine-5'-diphosphate + diphosphate. It catalyses the reaction 1-octadecanoyl-2-(9Z-octadecenoyl)-sn-glycero-3-phosphate + CTP + H(+) = 1-octadecanoyl-2-(9Z-octadecenoyl)-sn-glycero-3-cytidine-5'-diphosphate + diphosphate. The enzyme catalyses 1-octadecanoyl-2-(4Z,7Z,10Z,13Z,16Z,19Z-docosahexaenoyl)-sn-glycero-3-phosphate + CTP + H(+) = 1-octadecanoyl-2-(4Z,7Z,10Z,13Z,16Z,19Z-docosahexaenoyl)-sn-glycero-3-cytidine-5'-diphosphate + diphosphate. The catalysed reaction is 1,2-di-(9Z,12Z-octadecadienoyl)-sn-glycero-3-phosphate + CTP + H(+) = 1,2-di-(9Z,12Z-octadecadienoyl)-sn-glycero-3-cytidine-5'-diphosphate + diphosphate. It carries out the reaction 1,2-di-(9Z-octadecenoyl)-sn-glycero-3-phosphate + CTP + H(+) = 1,2-di-(9Z-octadecenoyl)-sn-glycero-3-cytidine-5'-diphosphate + diphosphate. It participates in phospholipid metabolism; CDP-diacylglycerol biosynthesis; CDP-diacylglycerol from sn-glycerol 3-phosphate: step 3/3. Its function is as follows. Catalyzes the conversion of phosphatidic acid (PA) to CDP-diacylglycerol (CDP-DAG), an essential intermediate in the synthesis of phosphatidylglycerol, cardiolipin and phosphatidylinositol. Exhibits specificity for the nature of the acyl chains at the sn-1 and sn-2 positions in the substrate, PA and the preferred acyl chain composition is 1-stearoyl-2-arachidonoyl-sn-phosphatidic acid. Plays an important role in regulating the growth and maturation of lipid droplets which are storage organelles at the center of lipid and energy homeostasis. This is Phosphatidate cytidylyltransferase 2 from Rattus norvegicus (Rat).